We begin with the raw amino-acid sequence, 194 residues long: Mpv17-like protein (194 aa).

Residues 1 to 14 (MASWWRAFPQAARR) are Cytoplasmic-facing. A helical transmembrane segment spans residues 15-34 (YPWPTNVLLYAGLFSAGDAL). Residues 16-55 (PWPTNVLLYAGLFSAGDALQQRLRGGPADWRQTRRVATLA) are targeting to peroxisomes. Topologically, residues 35 to 50 (QQRLRGGPADWRQTRR) are lumenal. Residues 51–67 (VATLAVTFHGNFNYVWL) traverse the membrane as a helical segment. At 68-91 (RLLERALPGRAPRTVLAKVLCDQT) the chain is on the cytoplasmic side. Residues 92–110 (VGGPIALSAFYVGMSVLQG) form a helical membrane-spanning segment. The Lumenal segment spans residues 111–150 (KDDIFLDLKQKFWNTYKSGLMYWPFVQLTNFSLVPVHWRT). The chain crosses the membrane as a helical span at residues 151–168 (AYTGLCAFLWATFLCFSQ). Topologically, residues 169-194 (QSGDGTLQSIFIFLRRKEASDKSPEK) are cytoplasmic.

It belongs to the peroxisomal membrane protein PXMP2/4 family. As to expression, isoform 1 and isoform 3 are expressed in the kidney (at protein level). Isoform 1 is expressed in the kidney, spleen, heart, brain, lung and liver. Isoform 3 is expressed in the kidney. Isoform 1 and isoform 3 expression increase during development, reache their highest level in adulthood and decrease with aging.

The protein localises to the peroxisome membrane. It localises to the cytoplasm. Its function is as follows. Participates in reactive oxygen species metabolism by up- or down-regulation of the genes of antioxidant enzymes. Protective against the mitochondrial apoptotic cascade. Functionally, participates in reactive oxygen species metabolism by up- or down-regulation of the genes of antioxidant enzymes. The polypeptide is Mpv17-like protein (Mpv17l) (Mus musculus (Mouse)).